The chain runs to 512 residues: Sucrose-6-phosphate hydrolase (512 aa).

Substrate is bound by residues 40 to 43 (WMND), Q59, W67, 102 to 103 (FS), 165 to 166 (RD), E229, and W311. D43 is a catalytic residue.

It belongs to the glycosyl hydrolase 32 family.

The protein localises to the cytoplasm. The enzyme catalyses Hydrolysis of terminal non-reducing beta-D-fructofuranoside residues in beta-D-fructofuranosides.. The protein operates within glycan biosynthesis; sucrose metabolism. This chain is Sucrose-6-phosphate hydrolase (sacA), found in Zymomonas mobilis subsp. mobilis (strain ATCC 31821 / ZM4 / CP4).